We begin with the raw amino-acid sequence, 436 residues long: Calcium/calmodulin-regulated receptor-like kinase 2 (436 aa).

Residues 7 to 34 (LVVIGISVGLALGLLLALLLFFAIKWYY) traverse the membrane as a helical segment. A disordered region spans residues 65–88 (DRANTESSQPPENGAPTQHQPWWN). Polar residues predominate over residues 69–88 (TESSQPPENGAPTQHQPWWN). The 262-residue stretch at 114–375 (QNFTTVLGQG…PSIGEVTQFI (262 aa)) folds into the Protein kinase domain. ATP-binding positions include 120–128 (LGQGSFGPV) and Lys-142. The residue at position 187 (Tyr-187) is a Phosphotyrosine. The active-site Proton acceptor is the Asp-239. At Thr-276 the chain carries Phosphothreonine. Tyr-284 is modified (phosphotyrosine).

Belongs to the protein kinase superfamily. Ser/Thr protein kinase family.

It is found in the cell membrane. The catalysed reaction is L-seryl-[protein] + ATP = O-phospho-L-seryl-[protein] + ADP + H(+). It catalyses the reaction L-threonyl-[protein] + ATP = O-phospho-L-threonyl-[protein] + ADP + H(+). This Arabidopsis thaliana (Mouse-ear cress) protein is Calcium/calmodulin-regulated receptor-like kinase 2.